Here is a 647-residue protein sequence, read N- to C-terminus: Threonine--tRNA ligase (647 aa).

The 63-residue stretch at 1 to 63 (MADISIKFPD…ASDGSIEIVT (63 aa)) folds into the TGS domain. The catalytic stretch occupies residues 242-540 (DHRVIGNQLD…LTEIYKGAFP (299 aa)). Zn(2+) is bound by residues C336, H387, and H517.

It belongs to the class-II aminoacyl-tRNA synthetase family. As to quaternary structure, homodimer. The cofactor is Zn(2+).

It is found in the cytoplasm. The enzyme catalyses tRNA(Thr) + L-threonine + ATP = L-threonyl-tRNA(Thr) + AMP + diphosphate + H(+). Functionally, catalyzes the attachment of threonine to tRNA(Thr) in a two-step reaction: L-threonine is first activated by ATP to form Thr-AMP and then transferred to the acceptor end of tRNA(Thr). Also edits incorrectly charged L-seryl-tRNA(Thr). In Levilactobacillus brevis (strain ATCC 367 / BCRC 12310 / CIP 105137 / JCM 1170 / LMG 11437 / NCIMB 947 / NCTC 947) (Lactobacillus brevis), this protein is Threonine--tRNA ligase.